We begin with the raw amino-acid sequence, 319 residues long: Ankyrin repeat domain-containing protein 1 (319 aa).

Residues 55 to 89 (LGEEQRKSEKVREAELKKKKLEQRSKLENLEDLEI) adopt a coiled-coil conformation. ANK repeat units lie at residues 152–181 (YKRT…QIEF), 185–214 (LEST…KISA), 218–247 (LLST…DLNA), 251–280 (EGDT…DLNV), and 284–315 (AGKT…KNSR).

As to quaternary structure, interacts with TTN/titin. Interacts with YBX1. As to expression, expressed in heart, cardiac muscle.

It localises to the nucleus. In terms of biological role, may play an important role in endothelial cell activation. May act as a nuclear transcription factor that negatively regulates the expression of cardiac genes. The protein is Ankyrin repeat domain-containing protein 1 (Ankrd1) of Rattus norvegicus (Rat).